Consider the following 217-residue polypeptide: GTP cyclohydrolase 1 (217 aa).

Zn(2+)-binding residues include Cys-109, His-112, and Cys-180.

The protein belongs to the GTP cyclohydrolase I family. As to quaternary structure, toroid-shaped homodecamer, composed of two pentamers of five dimers.

It catalyses the reaction GTP + H2O = 7,8-dihydroneopterin 3'-triphosphate + formate + H(+). Its pathway is cofactor biosynthesis; 7,8-dihydroneopterin triphosphate biosynthesis; 7,8-dihydroneopterin triphosphate from GTP: step 1/1. The chain is GTP cyclohydrolase 1 from Vibrio cholerae serotype O1 (strain ATCC 39315 / El Tor Inaba N16961).